The chain runs to 404 residues: Trigger factor (404 aa).

A PPIase FKBP-type domain is found at 160–225 (KDHLFVRTEE…VLEVKTLKLP (66 aa)).

It belongs to the FKBP-type PPIase family. Tig subfamily.

Its subcellular location is the cytoplasm. It carries out the reaction [protein]-peptidylproline (omega=180) = [protein]-peptidylproline (omega=0). Its function is as follows. Involved in protein export. Acts as a chaperone by maintaining the newly synthesized protein in an open conformation. Functions as a peptidyl-prolyl cis-trans isomerase. The chain is Trigger factor from Thermus thermophilus (strain ATCC 27634 / DSM 579 / HB8).